The chain runs to 471 residues: 6-phosphofructo-2-kinase/fructose-2,6-bisphosphatase 1 (471 aa).

Position 2 is an N-acetylserine (serine 2). The 6-phosphofructo-2-kinase stretch occupies residues serine 2–threonine 250. The residue at position 33 (serine 33) is a Phosphoserine; by PKA. Glycine 49 to tyrosine 57 lines the ATP pocket. Arginine 82 and arginine 105 together coordinate beta-D-fructose 6-phosphate. Residue aspartate 131 is part of the active site. 2 residues coordinate beta-D-fructose 6-phosphate: threonine 133 and arginine 139. The residue at position 141 (serine 141) is a Phosphoserine. Cysteine 161 is a catalytic residue. Asparagine 170–lysine 175 provides a ligand contact to ATP. Positions 175, 196, and 200 each coordinate beta-D-fructose 6-phosphate. The tract at residues proline 251 to tyrosine 471 is fructose-2,6-bisphosphatase. A beta-D-fructose 2,6-bisphosphate-binding site is contributed by arginine 258. Histidine 259 functions as the Tele-phosphohistidine intermediate in the catalytic mechanism. Positions 265, 271, and 308 each coordinate beta-D-fructose 2,6-bisphosphate. Residue glutamate 328 is the Proton donor/acceptor of the active site. Residues tyrosine 339, arginine 353, lysine 357, tyrosine 368, glutamine 394, and arginine 398 each contribute to the beta-D-fructose 2,6-bisphosphate site. ATP is bound at residue phenylalanine 350–arginine 353. Residues glutamine 394–arginine 398 and tyrosine 430 each bind ATP.

It in the C-terminal section; belongs to the phosphoglycerate mutase family. In terms of assembly, homodimer. Liver.

The catalysed reaction is beta-D-fructose 2,6-bisphosphate + H2O = beta-D-fructose 6-phosphate + phosphate. The enzyme catalyses beta-D-fructose 6-phosphate + ATP = beta-D-fructose 2,6-bisphosphate + ADP + H(+). Phosphorylation at Ser-33 inhibits the kinase and activates the bisphosphatase. Its function is as follows. Synthesis and degradation of fructose 2,6-bisphosphate. This is 6-phosphofructo-2-kinase/fructose-2,6-bisphosphatase 1 from Rattus norvegicus (Rat).